A 306-amino-acid chain; its full sequence is MGSFQLEDFVAGWIGGVASVIVGYPLDTVKTRLQAGVGYANTFNCIRMVYKRERVFGFFKGMSFPLASIAIYNSVVFGVFSNTQRFLSKYRCGELEAGPGRSLSDLLLASMLTGVVSVGLGGPVELIKIRLQMQTQPFREASHGLKSRAVAAYQGPVHCIATIVQMEGLTGLYRGASAMLLRDIPGYCFYFIPYVFLSEWITPEACTGPSPYAAWLAGGIAGAISWGTATPMDVVKSRIQADGVYLNKYRGVVDCISQSYQQEGFKVFFRGITVNAVRGFPMSAAMFLGYELSLKALRGEHTVRSE.

Solcar repeat units lie at residues 3 to 86 (SFQL…TQRF), 101 to 200 (RSLS…LSEW), and 209 to 296 (PSPY…SLKA). The next 6 helical transmembrane spans lie at 9-29 (FVAGWIGGVASVIVGYPLDTV), 61-81 (GMSFPLASIAIYNSVVFGVFS), 107-127 (LLASMLTGVVSVGLGGPVELI), 184-204 (IPGYCFYFIPYVFLSEWITPE), 212-232 (YAAWLAGGIAGAISWGTATPM), and 272-290 (ITVNAVRGFPMSAAMFLGY).

It belongs to the mitochondrial carrier (TC 2.A.29) family.

The protein localises to the mitochondrion inner membrane. This Mus musculus (Mouse) protein is Solute carrier family 25 member 48 (Slc25a48).